Here is a 316-residue protein sequence, read N- to C-terminus: Malate dehydrogenase 2 (316 aa).

Residues 10 to 15 (GGGQIG) and aspartate 34 each bind NAD(+). Positions 83 and 89 each coordinate substrate. Residues asparagine 96 and 119–121 (ISN) contribute to the NAD(+) site. Substrate contacts are provided by asparagine 121 and arginine 152. Catalysis depends on histidine 176, which acts as the Proton acceptor.

It belongs to the LDH/MDH superfamily. MDH type 3 family.

It catalyses the reaction (S)-malate + NAD(+) = oxaloacetate + NADH + H(+). Functionally, catalyzes the reversible oxidation of malate to oxaloacetate. In Anaeromyxobacter dehalogenans (strain 2CP-C), this protein is Malate dehydrogenase 2.